The chain runs to 207 residues: Protein dct-5 (207 aa).

Residues 13 to 33 (LNFILSIMNSYLFVLIVSIGF) traverse the membrane as a helical segment.

It localises to the membrane. Functionally, acts downstream of daf-16/foxo to suppress tumors induced by disruption of gld-1. Potentially a direct target of daf-15/foxo. The sequence is that of Protein dct-5 (dct-5) from Caenorhabditis elegans.